A 420-amino-acid chain; its full sequence is ATP phosphoribosyltransferase regulatory subunit (420 aa).

This sequence belongs to the class-II aminoacyl-tRNA synthetase family. HisZ subfamily. Heteromultimer composed of HisG and HisZ subunits.

It is found in the cytoplasm. It functions in the pathway amino-acid biosynthesis; L-histidine biosynthesis; L-histidine from 5-phospho-alpha-D-ribose 1-diphosphate: step 1/9. Required for the first step of histidine biosynthesis. May allow the feedback regulation of ATP phosphoribosyltransferase activity by histidine. The polypeptide is ATP phosphoribosyltransferase regulatory subunit (Bacillus mycoides (strain KBAB4) (Bacillus weihenstephanensis)).